A 1218-amino-acid polypeptide reads, in one-letter code: Coatomer subunit alpha-2 (1218 aa).

WD repeat units follow at residues 7–48 (TKSN…DRFD), 49–88 (EHDG…CLFT), 91–132 (GHLD…AVLT), 133–172 (GHNH…KKSV), 202–241 (GHDR…AWEV), 246–285 (GHMN…GIQT), 288–326 (REHD…PAFS), and 363–404 (SLNQ…AGRA). The segment at 855 to 876 (MANGGDGFDAEEGEANEEDGEE) is disordered. Positions 862–876 (FDAEEGEANEEDGEE) are enriched in acidic residues.

Oligomeric complex that consists of at least the alpha, beta, beta', gamma, delta, epsilon and zeta subunits.

Its subcellular location is the cytoplasm. It localises to the golgi apparatus membrane. It is found in the cytoplasmic vesicle. The protein resides in the COPI-coated vesicle membrane. In terms of biological role, the coatomer is a cytosolic protein complex that binds to dilysine motifs and reversibly associates with Golgi non-clathrin-coated vesicles, which further mediate biosynthetic protein transport from the ER, via the Golgi up to the trans Golgi network. Coatomer complex is required for budding from Golgi membranes, and is essential for the retrograde Golgi-to-ER transport of dilysine-tagged proteins. This Oryza sativa subsp. japonica (Rice) protein is Coatomer subunit alpha-2.